The following is a 675-amino-acid chain: Protein distal antenna (675 aa).

The HTH psq-type domain occupies 5–56 (TKGKRPLRHLTATDKIDAIQRIHDGESKASVARDIGVPESTLRGWCKNEEKL). A DNA-binding region (H-T-H motif) is located at residues 32 to 52 (KASVARDIGVPESTLRGWCKN). 5 disordered regions span residues 239-269 (QSLR…KNPS), 337-393 (LYSS…PEDT), 458-534 (LNII…SKCN), 546-596 (FQNP…AHKS), and 655-675 (ERQQ…RRRK). Residues 339–368 (SSMPRPSSPQQSSSPPQQHQQVQHHPSTQT) show a composition bias toward low complexity. The span at 369 to 384 (PTPPIVSTPQPTPPSS) shows a compositional bias: pro residues. Residues 469–478 (VKSEPEDLSN) show a composition bias toward basic and acidic residues. Residues 479-493 (HNHSSSNAAAVAAPA) show a composition bias toward low complexity. A compositionally biased stretch (polar residues) spans 499–508 (FNPSPSTSAK). A compositionally biased stretch (acidic residues) spans 513–528 (QEDDEEQAGPADDESP). Residues 559–579 (NLSIRSNNSPRRRSVSPAVSN) show a composition bias toward low complexity.

Homomers. Interacts with itself, danr, ey and dac to form a complex (or complexes) containing the RD factors.

It localises to the nucleus. Probable transcription factor with a role in the retinal determination (RD) network. Contributes to differentiation of antenna-specific characteristics. The sequence is that of Protein distal antenna from Aedes aegypti (Yellowfever mosquito).